The primary structure comprises 329 residues: GTP 3',8-cyclase (329 aa).

One can recognise a Radical SAM core domain in the interval 8–234 (AFARKFYYLR…QLRQRSDGPA (227 aa)). Arg17 lines the GTP pocket. [4Fe-4S] cluster-binding residues include Cys24 and Cys28. S-adenosyl-L-methionine is bound at residue Tyr30. A [4Fe-4S] cluster-binding site is contributed by Cys31. Arg68 contacts GTP. Gly72 lines the S-adenosyl-L-methionine pocket. Thr99 contributes to the GTP binding site. Ser123 contacts S-adenosyl-L-methionine. Lys160 provides a ligand contact to GTP. Residue Met194 coordinates S-adenosyl-L-methionine. [4Fe-4S] cluster-binding residues include Cys257 and Cys260. 262 to 264 (RLR) is a GTP binding site. Cys274 contacts [4Fe-4S] cluster.

This sequence belongs to the radical SAM superfamily. MoaA family. Monomer and homodimer. It depends on [4Fe-4S] cluster as a cofactor.

The catalysed reaction is GTP + AH2 + S-adenosyl-L-methionine = (8S)-3',8-cyclo-7,8-dihydroguanosine 5'-triphosphate + 5'-deoxyadenosine + L-methionine + A + H(+). The protein operates within cofactor biosynthesis; molybdopterin biosynthesis. Its function is as follows. Catalyzes the cyclization of GTP to (8S)-3',8-cyclo-7,8-dihydroguanosine 5'-triphosphate. In Escherichia coli O45:K1 (strain S88 / ExPEC), this protein is GTP 3',8-cyclase.